Here is a 173-residue protein sequence, read N- to C-terminus: Large ribosomal subunit protein uL10 (173 aa).

This sequence belongs to the universal ribosomal protein uL10 family. As to quaternary structure, part of the ribosomal stalk of the 50S ribosomal subunit. The N-terminus interacts with L11 and the large rRNA to form the base of the stalk. The C-terminus forms an elongated spine to which L12 dimers bind in a sequential fashion forming a multimeric L10(L12)X complex.

Its function is as follows. Forms part of the ribosomal stalk, playing a central role in the interaction of the ribosome with GTP-bound translation factors. The chain is Large ribosomal subunit protein uL10 from Chloroherpeton thalassium (strain ATCC 35110 / GB-78).